The primary structure comprises 322 residues: uncharacterized protein (322 aa).

The tract at residues 277–322 (LVTYGGKDGPSDNEDGPSDDEDGPSDDEEGLSKDGVSEYYQSDLDD) is disordered. Acidic residues predominate over residues 287 to 305 (SDNEDGPSDDEDGPSDDEE).

This is an uncharacterized protein from Frog virus 3 (isolate Goorha) (FV-3).